The chain runs to 362 residues: Methylthioribose-1-phosphate isomerase (362 aa).

The Proton donor role is filled by D252.

It belongs to the eIF-2B alpha/beta/delta subunits family. MtnA subfamily.

The protein localises to the cytoplasm. The protein resides in the nucleus. It catalyses the reaction 5-(methylsulfanyl)-alpha-D-ribose 1-phosphate = 5-(methylsulfanyl)-D-ribulose 1-phosphate. The protein operates within amino-acid biosynthesis; L-methionine biosynthesis via salvage pathway; L-methionine from S-methyl-5-thio-alpha-D-ribose 1-phosphate: step 1/6. Functionally, catalyzes the interconversion of methylthioribose-1-phosphate (MTR-1-P) into methylthioribulose-1-phosphate (MTRu-1-P). The polypeptide is Methylthioribose-1-phosphate isomerase (Drosophila persimilis (Fruit fly)).